We begin with the raw amino-acid sequence, 288 residues long: Protease HtpX (288 aa).

Transmembrane regions (helical) follow at residues 5–25 (IALF…VMSL) and 34–54 (SGLL…SLLL). His-140 contributes to the Zn(2+) binding site. The active site involves Glu-141. Zn(2+) is bound at residue His-144. Helical transmembrane passes span 155 to 175 (LLQG…GGII) and 190 to 210 (FAYF…ATMI). Glu-219 lines the Zn(2+) pocket.

It belongs to the peptidase M48B family. Zn(2+) serves as cofactor.

The protein resides in the cell inner membrane. In Stenotrophomonas maltophilia (strain R551-3), this protein is Protease HtpX.